The primary structure comprises 436 residues: 3-ketoacyl-CoA thiolase (436 aa).

C99 (acyl-thioester intermediate) is an active-site residue. Residues H392 and C422 each act as proton acceptor in the active site.

This sequence belongs to the thiolase-like superfamily. Thiolase family. In terms of assembly, heterotetramer of two alpha chains (FadJ) and two beta chains (FadI).

Its subcellular location is the cytoplasm. It catalyses the reaction an acyl-CoA + acetyl-CoA = a 3-oxoacyl-CoA + CoA. It participates in lipid metabolism; fatty acid beta-oxidation. Catalyzes the final step of fatty acid oxidation in which acetyl-CoA is released and the CoA ester of a fatty acid two carbons shorter is formed. The chain is 3-ketoacyl-CoA thiolase from Escherichia coli O7:K1 (strain IAI39 / ExPEC).